Consider the following 252-residue polypeptide: Short-chain dehydrogenase anuI (252 aa).

NADP(+) contacts are provided by L18, D65, N92, Y171, K175, and T206. Y171 serves as the catalytic Proton acceptor. The active-site Proton donor is the Y171. K175 serves as the catalytic Lowers pKa of active site Tyr.

It belongs to the short-chain dehydrogenases/reductases (SDR) family.

Highly reducing polyketide synthase; part of the gene cluster that mediates the biosynthesis of annullatin D, an alkylated aromatic polyketide with a fused dihydrobenzofuran lactone ring system that exhibits potent agonistic activities toward the cannabinoid receptors. AnuI does not seem to play a role within the pathway. The annullatin backbone 2-hydroxymethyl-3-pentylphenol is assembled from one acetyl-CoA starter unit and 5 malonyl-CoA elongation units by cooperation of the highly reducing polyketide synthase anuA, the short-chain dehydrogenase anuB and the oxidoreductase anuC, before being hydroxylated at the C-5 alkyl chain by the cytochrome P450 monooxygenase anuE to form (8S)-annullatin E. The prenyltransferase anuH subsequently installs one isoprenyl group at the benzene ring to form (8S)-annullatin J. Enzymatic or nonenzymatic dihydro-benzofuran ring formation between the prenyl and the phenolic hydroxyl groups in (8S)-annullatin J results in two diastereomers (2S,9S)-annullatin H and compound 12. The intermediate (2S,9S)-annullatin H is then converted to (2S,9S)-annullatin D by the FAD-linked oxidoreductase anuG-catalyzed five-member lactone ring formation. The isomer 12 acts as a substrate for the short-chain dehydrogenase anuF and is oxidized to (2R)-annullatin F, which is subsequently acetylated by an acetyltransferase leading to (2R)-annullatin G formation. The remaining enzymes identified within the cluster, anuD, anuI and anuJ, seem not to be involved in annullatin biosynthesis. The sequence is that of Short-chain dehydrogenase anuI from Penicillium roqueforti (strain FM164).